We begin with the raw amino-acid sequence, 296 residues long: Zinc finger protein 75A (296 aa).

The region spanning 1–66 is the KRAB domain; it reads MYFSQEEWEL…VSPEFKDSAG (66 aa). C2H2-type zinc fingers lie at residues 161–183, 189–211, 217–239, 245–267, and 273–295; these read FKCQ…QRIH, YKCQ…LTTH, YKCS…QRTH, FTCH…RRTH, and YTCS…QKLH.

It belongs to the krueppel C2H2-type zinc-finger protein family.

It localises to the nucleus. May be involved in transcriptional regulation. This chain is Zinc finger protein 75A (ZNF75A), found in Homo sapiens (Human).